Here is a 128-residue protein sequence, read N- to C-terminus: Neuromedin-S (128 aa).

Residues 1–27 (MRSEKHLLPLPPLLAICCLGTLHLSSG) form the signal peptide. 2 propeptides span residues 28–72 (FPQS…HEIY) and 75–100 (FLFQFSRAKDPSLKIGESQIATAEYT). Residue Asn-119 is modified to Asparagine amide. The propeptide occupies 123 to 128 (VSINEH).

This sequence belongs to the NmU family. In terms of tissue distribution, expressed by the skin glands.

The protein resides in the secreted. Its function is as follows. Neuromedin-S-17: stimulates uterine smooth muscle contraction (B similarity). Synthetic peptide NmS-17 induces calcium mobilization in CHO cells transfected with either human FM-3/GPR66 (EC(50)=0.085 nM) or FM-4/TGR-1 (EC(50)=0.231 nM) NmU/NmS receptors. The polypeptide is Neuromedin-S (nms) (Bombina variegata (Yellow-bellied toad)).